Reading from the N-terminus, the 541-residue chain is Chaperonin GroEL (541 aa).

Residues 29-32, 86-90, Gly413, and Asp495 contribute to the ATP site; these read TLGP and DGTTT.

This sequence belongs to the chaperonin (HSP60) family. Forms a cylinder of 14 subunits composed of two heptameric rings stacked back-to-back. Interacts with the co-chaperonin GroES.

It localises to the cytoplasm. The catalysed reaction is ATP + H2O + a folded polypeptide = ADP + phosphate + an unfolded polypeptide.. Functionally, together with its co-chaperonin GroES, plays an essential role in assisting protein folding. The GroEL-GroES system forms a nano-cage that allows encapsulation of the non-native substrate proteins and provides a physical environment optimized to promote and accelerate protein folding. This Thermoanaerobacter pseudethanolicus (strain ATCC 33223 / 39E) (Clostridium thermohydrosulfuricum) protein is Chaperonin GroEL.